The sequence spans 129 residues: Small ribosomal subunit protein uS11 (129 aa).

This sequence belongs to the universal ribosomal protein uS11 family. In terms of assembly, part of the 30S ribosomal subunit. Interacts with proteins S7 and S18. Binds to IF-3.

Functionally, located on the platform of the 30S subunit, it bridges several disparate RNA helices of the 16S rRNA. Forms part of the Shine-Dalgarno cleft in the 70S ribosome. The protein is Small ribosomal subunit protein uS11 of Methylobacterium nodulans (strain LMG 21967 / CNCM I-2342 / ORS 2060).